The following is a 284-amino-acid chain: Sulfotransferase 4A1 (284 aa).

A phosphothreonine mark is found at Thr8, Thr11, and Thr205.

The protein belongs to the sulfotransferase 1 family. In terms of tissue distribution, highly expressed in the cerebral cortex and frontal lobe, slightly less in the cerebellum, occipital and temporal lobes, relatively low in the medulla and putamen, and lowest in the spinal cord. No expression detected in the pancreas. Highly expressed in fetal brain and occipital lobe, slightly less in the whole brain, frontal lobe, hippocampus, and lung, very low expression in cerebellum, medulla oblongata, temporal lobe, testis, kidney and appendix.

The protein resides in the cytoplasm. Functionally, atypical sulfotransferase family member with very low affinity for 3'-phospho-5'-adenylyl sulfate (PAPS) and very low catalytic activity towards L-triiodothyronine, thyroxine, estrone, p-nitrophenol, 2-naphthylamine, and 2-beta-naphthol. May have a role in the metabolism of drugs and neurotransmitters in the CNS. The chain is Sulfotransferase 4A1 (SULT4A1) from Homo sapiens (Human).